An 87-amino-acid polypeptide reads, in one-letter code: Cell division topological specificity factor (87 aa).

It belongs to the MinE family.

In terms of biological role, prevents the cell division inhibition by proteins MinC and MinD at internal division sites while permitting inhibition at polar sites. This ensures cell division at the proper site by restricting the formation of a division septum at the midpoint of the long axis of the cell. The chain is Cell division topological specificity factor from Vibrio parahaemolyticus serotype O3:K6 (strain RIMD 2210633).